We begin with the raw amino-acid sequence, 330 residues long: Aspartate--ammonia ligase (330 aa).

Belongs to the class-II aminoacyl-tRNA synthetase family. AsnA subfamily.

The protein localises to the cytoplasm. It catalyses the reaction L-aspartate + NH4(+) + ATP = L-asparagine + AMP + diphosphate + H(+). It participates in amino-acid biosynthesis; L-asparagine biosynthesis; L-asparagine from L-aspartate (ammonia route): step 1/1. The polypeptide is Aspartate--ammonia ligase (Actinobacillus succinogenes (strain ATCC 55618 / DSM 22257 / CCUG 43843 / 130Z)).